A 225-amino-acid chain; its full sequence is Ribosomal RNA small subunit methyltransferase G (225 aa).

Residues Gly62, Ala113–Glu114, and Lys130 each bind S-adenosyl-L-methionine.

The protein belongs to the methyltransferase superfamily. RNA methyltransferase RsmG family.

It localises to the cytoplasm. Specifically methylates the N7 position of a guanine in 16S rRNA. This Petrotoga mobilis (strain DSM 10674 / SJ95) protein is Ribosomal RNA small subunit methyltransferase G.